Reading from the N-terminus, the 304-residue chain is CRISPR-associated endonuclease Cas1 (304 aa).

Mn(2+) is bound by residues glutamate 148, histidine 204, and glutamate 219.

The protein belongs to the CRISPR-associated endonuclease Cas1 family. Homodimer, forms a heterotetramer with a Cas2 homodimer. Requires Mg(2+) as cofactor. Mn(2+) is required as a cofactor.

In terms of biological role, CRISPR (clustered regularly interspaced short palindromic repeat), is an adaptive immune system that provides protection against mobile genetic elements (viruses, transposable elements and conjugative plasmids). CRISPR clusters contain spacers, sequences complementary to antecedent mobile elements, and target invading nucleic acids. CRISPR clusters are transcribed and processed into CRISPR RNA (crRNA). Acts as a dsDNA endonuclease. Involved in the integration of spacer DNA into the CRISPR cassette. This is CRISPR-associated endonuclease Cas1 from Neisseria meningitidis serogroup C (strain 8013).